Here is a 90-residue protein sequence, read N- to C-terminus: Co-chaperonin GroES (90 aa).

This sequence belongs to the GroES chaperonin family. In terms of assembly, heptamer of 7 subunits arranged in a ring. Interacts with the chaperonin GroEL.

The protein resides in the cytoplasm. In terms of biological role, together with the chaperonin GroEL, plays an essential role in assisting protein folding. The GroEL-GroES system forms a nano-cage that allows encapsulation of the non-native substrate proteins and provides a physical environment optimized to promote and accelerate protein folding. GroES binds to the apical surface of the GroEL ring, thereby capping the opening of the GroEL channel. In Bacteroides thetaiotaomicron (strain ATCC 29148 / DSM 2079 / JCM 5827 / CCUG 10774 / NCTC 10582 / VPI-5482 / E50), this protein is Co-chaperonin GroES.